The following is a 466-amino-acid chain: Argininosuccinate lyase (466 aa).

This sequence belongs to the lyase 1 family. Argininosuccinate lyase subfamily.

The protein resides in the cytoplasm. The catalysed reaction is 2-(N(omega)-L-arginino)succinate = fumarate + L-arginine. Its pathway is amino-acid biosynthesis; L-arginine biosynthesis; L-arginine from L-ornithine and carbamoyl phosphate: step 3/3. This chain is Argininosuccinate lyase, found in Syntrophobacter fumaroxidans (strain DSM 10017 / MPOB).